Consider the following 203-residue polypeptide: Large ribosomal subunit protein uL13 (203 aa).

A2 is subject to N-acetylalanine. R59 is subject to Citrulline. The residue at position 77 (S77) is a Phosphoserine. Citrulline is present on R140. N6-acetyllysine is present on K191.

The protein belongs to the universal ribosomal protein uL13 family. Component of the 60S ribosome. Component of the GAIT complex. Interacts with EIF4G1. Phosphorylation at Ser-77 upon interferon-gamma treatment in macrophages involves a DAPK1-DAPK3 kinase cascade and is causing release from the ribosome, association with the GAIT complex and subsequent involvement in transcript-selective translation inhibition. In terms of processing, citrullinated by PADI4.

It localises to the cytoplasm. In terms of biological role, associated with ribosomes but is not required for canonical ribosome function and has extra-ribosomal functions. Component of the GAIT (gamma interferon-activated inhibitor of translation) complex which mediates interferon-gamma-induced transcript-selective translation inhibition in inflammation processes. Upon interferon-gamma activation and subsequent phosphorylation dissociates from the ribosome and assembles into the GAIT complex which binds to stem loop-containing GAIT elements in the 3'-UTR of diverse inflammatory mRNAs (such as ceruplasmin) and suppresses their translation. In the GAIT complex interacts with m7G cap-bound eIF4G at or near the eIF3-binding site and blocks the recruitment of the 43S ribosomal complex. Involved in methylation of rRNA. This is Large ribosomal subunit protein uL13 (Rpl13a) from Rattus norvegicus (Rat).